The following is a 452-amino-acid chain: Putative zinc metalloprotease VC_2253 (452 aa).

His22 lines the Zn(2+) pocket. Glu23 is a catalytic residue. His26 contacts Zn(2+). A helical transmembrane segment spans residues 98 to 120 (SAIVSAGPIFNFLFAIFAYWLVF). Residues 197–292 (NLRDWNFDPE…QVELTLIPDS (96 aa)) enclose the PDZ domain. The next 2 helical transmembrane spans lie at 378-400 (FVYF…LVPL) and 428-447 (MGYR…AIFN).

The protein belongs to the peptidase M50B family. It depends on Zn(2+) as a cofactor.

The protein resides in the cell inner membrane. In Vibrio cholerae serotype O1 (strain ATCC 39315 / El Tor Inaba N16961), this protein is Putative zinc metalloprotease VC_2253.